The following is a 479-amino-acid chain: Anaerobic nitric oxide reductase flavorubredoxin (479 aa).

The tract at residues 30 to 210 (LRGSSYNSYL…PFSRLVTPKI (181 aa)) is zinc metallo-hydrolase. Positions 79, 81, 83, 147, 166, and 227 each coordinate Fe cation. The Flavodoxin-like domain maps to 254–393 (ITIFYDTMSN…LCREHGREIA (140 aa)). FMN is bound by residues 260–264 (TMSNN) and 342–369 (AFGSHGWSGGAVDRLSTRLQDAGFEMSL). The 52-residue stretch at 423–474 (GPRMQCSVCQWIYDPAKGEPMQDVAPGTPWSEVPDNFLCPECSLGKDVFEEL) folds into the Rubredoxin-like domain. Fe cation is bound by residues C428, C431, C461, and C464.

The protein in the N-terminal section; belongs to the zinc metallo-hydrolase group 3 family. In terms of assembly, homotetramer. Fe cation serves as cofactor. The cofactor is FMN.

It localises to the cytoplasm. It functions in the pathway nitrogen metabolism; nitric oxide reduction. Its function is as follows. Anaerobic nitric oxide reductase; uses NADH to detoxify nitric oxide (NO), protecting several 4Fe-4S NO-sensitive enzymes. Has at least 2 reductase partners, only one of which (NorW, flavorubredoxin reductase) has been identified. NO probably binds to the di-iron center; electrons enter from the NorW at rubredoxin and are transferred sequentially to the FMN center and the di-iron center. Also able to function as an aerobic oxygen reductase. This Shigella boydii serotype 4 (strain Sb227) protein is Anaerobic nitric oxide reductase flavorubredoxin.